The sequence spans 401 residues: Enoyl-[acyl-carrier-protein] reductase [NADH] (401 aa).

Residues 48–53, 74–75, 111–112, and 140–141 each bind NAD(+); these read GASSGY, FE, DA, and LA. Y226 contacts substrate. Residue Y236 is the Proton donor of the active site. Residues K245 and 274–276 contribute to the NAD(+) site; that span reads VVT.

It belongs to the TER reductase family. As to quaternary structure, monomer.

It catalyses the reaction a 2,3-saturated acyl-[ACP] + NAD(+) = a (2E)-enoyl-[ACP] + NADH + H(+). It functions in the pathway lipid metabolism; fatty acid biosynthesis. In terms of biological role, involved in the final reduction of the elongation cycle of fatty acid synthesis (FAS II). Catalyzes the reduction of a carbon-carbon double bond in an enoyl moiety that is covalently linked to an acyl carrier protein (ACP). This Xylella fastidiosa (strain Temecula1 / ATCC 700964) protein is Enoyl-[acyl-carrier-protein] reductase [NADH].